We begin with the raw amino-acid sequence, 245 residues long: Membrane-spanning 4-domains subfamily A member 15 (245 aa).

A disordered region spans residues 1-30 (MWERRGRGESAAGTAAVASRNASGLRPPPA). 4 consecutive transmembrane segments (helical) span residues 78–98 (GTVQ…LLMV), 103–123 (LGML…FIIS), 147–167 (ILSA…FGVT), and 176–196 (LAVL…ATHF).

This sequence belongs to the MS4A family.

It localises to the membrane. Functionally, may be involved in signal transduction as a component of a multimeric receptor complex. This chain is Membrane-spanning 4-domains subfamily A member 15 (Ms4a15), found in Mus musculus (Mouse).